Consider the following 507-residue polypeptide: WD-40 repeat-containing protein MSI4 (507 aa).

The residue at position 1 (methionine 1) is an N-acetylmethionine. The tract at residues 1-66 (MESDEAAAVS…KTQQSPSVDE (66 aa)) is disordered. WD repeat units follow at residues 95-137 (RWGP…KPRV), 162-202 (IHPG…NRHA), and 217-257 (GHQD…TTIG). Residues 258–272 (TDSKSSGSIIKQTGE) show a composition bias toward polar residues. The tract at residues 258 to 282 (TDSKSSGSIIKQTGEGTDKNESPTV) is disordered. WD repeat units follow at residues 290–330 (GHED…NPVT), 335–375 (AHDA…ANGV), 384–424 (GHKA…KKSD), and 439–486 (GHRD…YRPE). The DWD box signature appears at 308–323 (FCSVGDDSCLILWDAR).

It belongs to the WD repeat RBAP46/RBAP48/MSI1 family. As to quaternary structure, interacts with AHL16 and HOS1. Interacts with LHP1, PDP1, PDP2 and PDP3. Component of the PRC2 (polycomb repressive complex 2) complex which regulates histone methylation on histone H3K27. In terms of tissue distribution, expressed in rosette leaves, cauline leaves, main stems and developing fruits. Expressed at higher levels in roots and flowers.

Its subcellular location is the nucleus. Functionally, core histone-binding subunit that may target chromatin assembly factors, chromatin remodeling factors and histone deacetylases to their histone substrates in a manner that is regulated by nucleosomal DNA. Component of the flowering autonomous pathway which positively regulates flowering by promoting transcriptional repression of the flowering repressor FLC. May promote histone deacetylation at the FLC locus leading to the formation of repressive chromatin structures. Forms a histone deacetylase complex with HDA5, HDA6 and FLD that represses FLC gene expression to control flowering time. Also negatively regulates cold-responsive genes. Acts together with PDP1 and MSI5 to regulate the function of the PRC2 complex on FLC. Required for systemic acquired resistance (SAR) toward pathogenic bacteria (e.g. Pseudomonas syringae pv tomato DC3000 (avrPto)). Together with FLD and MSI4/FVE, contributes to dehydroabietinal-dependent (DA, a diterpenoid tricyclic diterpene) activation of flowering ans SAR. The protein is WD-40 repeat-containing protein MSI4 of Arabidopsis thaliana (Mouse-ear cress).